Consider the following 332-residue polypeptide: DNA-directed RNA polymerase subunit alpha (332 aa).

Positions 1 to 232 (MQVSNFLKPR…DQLTAFVELE (232 aa)) are alpha N-terminal domain (alpha-NTD). The segment at 246–332 (IDPVLLQPID…LREEETKVTA (87 aa)) is alpha C-terminal domain (alpha-CTD).

It belongs to the RNA polymerase alpha chain family. As to quaternary structure, homodimer. The RNAP catalytic core consists of 2 alpha, 1 beta, 1 beta' and 1 omega subunit. When a sigma factor is associated with the core the holoenzyme is formed, which can initiate transcription.

It catalyses the reaction RNA(n) + a ribonucleoside 5'-triphosphate = RNA(n+1) + diphosphate. Its function is as follows. DNA-dependent RNA polymerase catalyzes the transcription of DNA into RNA using the four ribonucleoside triphosphates as substrates. The protein is DNA-directed RNA polymerase subunit alpha of Nitrosococcus oceani (strain ATCC 19707 / BCRC 17464 / JCM 30415 / NCIMB 11848 / C-107).